Consider the following 483-residue polypeptide: Probable L-xylulose kinase (483 aa).

It belongs to the FGGY kinase family. In terms of assembly, homodimer.

It catalyses the reaction L-xylulose + ATP = L-xylulose 5-phosphate + ADP + H(+). The chain is Probable L-xylulose kinase (lyx) from Pasteurella multocida (strain Pm70).